A 611-amino-acid chain; its full sequence is Broad-specificity linear acyl-CoA dehydrogenase FadE5 (611 aa).

FAD is bound by residues M162–T165, S171, and T198. S171 is an a 2,3-saturated acyl-CoA binding site. A 2,3-saturated acyl-CoA is bound by residues T224–K225 and R301. R326 contributes to the FAD binding site. K338 is an a 2,3-saturated acyl-CoA binding site. Q420–G424 contributes to the FAD binding site. E447 is a binding site for a 2,3-saturated acyl-CoA. The active-site Proton acceptor is the E447. An FAD-binding site is contributed by T449. Residues D456 and R460 to K461 contribute to the a 2,3-saturated acyl-CoA site.

Belongs to the acyl-CoA dehydrogenase family. As to quaternary structure, homodimer. FAD is required as a cofactor.

It carries out the reaction a long-chain 2,3-saturated fatty acyl-CoA + oxidized [electron-transfer flavoprotein] + H(+) = a long-chain (2E)-enoyl-CoA + reduced [electron-transfer flavoprotein]. It catalyses the reaction a medium-chain 2,3-saturated fatty acyl-CoA + oxidized [electron-transfer flavoprotein] + H(+) = a medium-chain (2E)-enoyl-CoA + reduced [electron-transfer flavoprotein]. The catalysed reaction is a short-chain 2,3-saturated fatty acyl-CoA + oxidized [electron-transfer flavoprotein] + H(+) = a short-chain (2E)-enoyl-CoA + reduced [electron-transfer flavoprotein]. The enzyme catalyses octadecanoyl-CoA + oxidized [electron-transfer flavoprotein] + H(+) = (2E)-octadecenoyl-CoA + reduced [electron-transfer flavoprotein]. It carries out the reaction oxidized [electron-transfer flavoprotein] + hexadecanoyl-CoA + H(+) = (2E)-hexadecenoyl-CoA + reduced [electron-transfer flavoprotein]. It catalyses the reaction dodecanoyl-CoA + oxidized [electron-transfer flavoprotein] + H(+) = (2E)-dodecenoyl-CoA + reduced [electron-transfer flavoprotein]. The catalysed reaction is decanoyl-CoA + oxidized [electron-transfer flavoprotein] + H(+) = (2E)-decenoyl-CoA + reduced [electron-transfer flavoprotein]. The enzyme catalyses hexanoyl-CoA + oxidized [electron-transfer flavoprotein] + H(+) = (2E)-hexenoyl-CoA + reduced [electron-transfer flavoprotein]. It carries out the reaction butanoyl-CoA + oxidized [electron-transfer flavoprotein] + H(+) = (2E)-butenoyl-CoA + reduced [electron-transfer flavoprotein]. Its pathway is lipid metabolism; fatty acid metabolism. Acyl-CoA dehydrogenase that exhibits broad specificity for linear acyl-CoA substrates, with a preference for long-chain substrates. This Mycobacterium tuberculosis (strain ATCC 25618 / H37Rv) protein is Broad-specificity linear acyl-CoA dehydrogenase FadE5.